A 160-amino-acid chain; its full sequence is Cytochrome b6-f complex subunit 4 (160 aa).

The next 3 membrane-spanning stretches (helical) occupy residues 36–56, 95–115, and 131–151; these read LLYI…GLAV, LLGV…PFIE, and AVFL…TFPI.

The protein belongs to the cytochrome b family. PetD subfamily. In terms of assembly, the 4 large subunits of the cytochrome b6-f complex are cytochrome b6, subunit IV (17 kDa polypeptide, petD), cytochrome f and the Rieske protein, while the 4 small subunits are petG, petL, petM and petN. The complex functions as a dimer.

The protein resides in the plastid. It localises to the cyanelle thylakoid membrane. Component of the cytochrome b6-f complex, which mediates electron transfer between photosystem II (PSII) and photosystem I (PSI), cyclic electron flow around PSI, and state transitions. The polypeptide is Cytochrome b6-f complex subunit 4 (Cyanophora paradoxa).